We begin with the raw amino-acid sequence, 480 residues long: ATP synthase subunit beta, chloroplastic (480 aa).

An ATP-binding site is contributed by 161-168 (GGAGVGKT).

The protein belongs to the ATPase alpha/beta chains family. In terms of assembly, F-type ATPases have 2 components, CF(1) - the catalytic core - and CF(0) - the membrane proton channel. CF(1) has five subunits: alpha(3), beta(3), gamma(1), delta(1), epsilon(1). CF(0) has four main subunits: a(1), b(1), b'(1) and c(9-12).

The protein localises to the plastid. It localises to the chloroplast thylakoid membrane. It carries out the reaction ATP + H2O + 4 H(+)(in) = ADP + phosphate + 5 H(+)(out). In terms of biological role, produces ATP from ADP in the presence of a proton gradient across the membrane. The catalytic sites are hosted primarily by the beta subunits. This is ATP synthase subunit beta, chloroplastic from Euglena gracilis.